A 471-amino-acid chain; its full sequence is 3-hydroxylaminophenol mutase (471 aa).

A GS beta-grasp domain is found at Asn-15 to Gly-100. One can recognise a GS catalytic domain in the interval Pro-107–Leu-471.

It belongs to the glutamine synthetase family.

The enzyme catalyses 3-hydroxyaminophenol = aminohydroquinone. With respect to regulation, is inhibited by H(2)O(2). 1,10-phenanthroline inhibits the activity slightly, but other metal cation chelators such as EDTA or tiron have no effect on the activity. Divalent metal cations and hydroxylamine have also no effect on the activity. Due to the relationship of the protein with glutamine synthetases, glutamate and glutamine were tested as inhibitors; neither preincubation of the compounds with the enzyme nor their addition to the assay buffer affected 3HAP mutase activity. In terms of biological role, catalyzes the isomerization of 3-hydroxylaminophenol (3HAP) to aminohydroquinone, a step in the degradative pathway of 3-nitrophenol. The enzymatic reaction is regiospecific since it leads to the formation of aminohydroquinone exclusively, without producing the isomeric 4-aminocatechol. Can also isomerize other hydroxylaminoaromatic compounds, such as hydroxylaminobenzene to a mixture of 2-aminophenol and 4-aminophenol, 4-hydroxylaminotoluene to 6-amino-m-cresol, and 2-chloro-5-hydroxylaminophenol to 2-amino-5-chlorohydroquinone. Does not act on 4-hydroxylaminobenzoate. In Cupriavidus pinatubonensis (strain JMP 134 / LMG 1197) (Cupriavidus necator (strain JMP 134)), this protein is 3-hydroxylaminophenol mutase.